A 312-amino-acid polypeptide reads, in one-letter code: Olfactory receptor 2L5 (312 aa).

The Extracellular segment spans residues 1-24 (MENYNQTSTDFILLGLFPPSKIGL). N-linked (GlcNAc...) asparagine glycosylation occurs at N5. The helical transmembrane segment at 25–48 (FLFILFVLIFLMALIGNLSMILLI) threads the bilayer. Residues 49–56 (FLDTHLHT) are Cytoplasmic-facing. A helical membrane pass occupies residues 57–78 (PMYFLLSQLSLIDLNYISTIVP). Topologically, residues 79-99 (KMASDFLYGNKSISFIGCGIQ) are extracellular. An intrachain disulfide couples C96 to C188. Residues 100 to 119 (SFFFMTFAGAEALLLTSMAY) form a helical membrane-spanning segment. Topologically, residues 120–138 (DRYVAICFPLHYPIRMSKR) are cytoplasmic. The helical transmembrane segment at 139–157 (MYVLMITGSWMIGSINSCA) threads the bilayer. Over 158 to 194 (HTVYAFRIPYCKSRAINHFFCDVPAMLTLACTDTWVY) the chain is Extracellular. Residues 195 to 218 (EYTVFLSSTIFLVFPFTGIACSYG) form a helical membrane-spanning segment. Topologically, residues 219–235 (WVLLAVYRMHSAEGRKK) are cytoplasmic. Residues 236 to 258 (AYSTCSTHLTVVTFYYAPFAYTY) traverse the membrane as a helical segment. Over 259–271 (LCPRSLRSLTEDK) the chain is Extracellular. The chain crosses the membrane as a helical span at residues 272-291 (VLAVFYTILTPMLNPIIYSL). Residues 292–312 (RNKEVMGALTRVIQNIFSVKM) lie on the Cytoplasmic side of the membrane.

It belongs to the G-protein coupled receptor 1 family.

It is found in the cell membrane. Its function is as follows. Odorant receptor. This chain is Olfactory receptor 2L5 (OR2L5), found in Homo sapiens (Human).